Here is a 223-residue protein sequence, read N- to C-terminus: Glycosylphosphatidylinositol anchor biosynthesis protein 11 (223 aa).

Helical transmembrane passes span 25-45, 52-72, 88-108, 120-140, 158-178, and 189-209; these read LAVVYGTLLLVYLRFIFSAGI, VMTQALPGLLLLHMGYCVVVL, MIAAALSVFFSVIIFGLLVLF, FVCAMHMSILAVLPLFFTYHL, VYAASVCTLIGAWLGAIPIPY, and ITILAGAYLGYFVGTLGGIAL.

Belongs to the PIGF family.

The protein resides in the endoplasmic reticulum membrane. It participates in glycolipid biosynthesis; glycosylphosphatidylinositol-anchor biosynthesis. In terms of biological role, acts in the GPI biosynthetic pathway between GlcNAc-PI synthesis and GPI transfer to protein. This Yarrowia lipolytica (strain CLIB 122 / E 150) (Yeast) protein is Glycosylphosphatidylinositol anchor biosynthesis protein 11 (GPI11).